The sequence spans 282 residues: NADPH-dependent 7-cyano-7-deazaguanine reductase (282 aa).

Position 88-90 (88-90 (IES)) interacts with substrate. 90-91 (SK) is a binding site for NADPH. C190 acts as the Thioimide intermediate in catalysis. The active-site Proton donor is D197. 229 to 230 (HE) contacts substrate. NADPH is bound at residue 258-259 (RG).

Belongs to the GTP cyclohydrolase I family. QueF type 2 subfamily. As to quaternary structure, homodimer.

It is found in the cytoplasm. It catalyses the reaction 7-aminomethyl-7-carbaguanine + 2 NADP(+) = 7-cyano-7-deazaguanine + 2 NADPH + 3 H(+). It functions in the pathway tRNA modification; tRNA-queuosine biosynthesis. In terms of biological role, catalyzes the NADPH-dependent reduction of 7-cyano-7-deazaguanine (preQ0) to 7-aminomethyl-7-deazaguanine (preQ1). This chain is NADPH-dependent 7-cyano-7-deazaguanine reductase, found in Escherichia coli O127:H6 (strain E2348/69 / EPEC).